The sequence spans 439 residues: GTPase Der (439 aa).

2 EngA-type G domains span residues 4-168 (PIVA…KDDE) and 177-352 (INIA…DNYT). Residues 10 to 17 (GRPNVGKS), 57 to 61 (DTGGI), 120 to 123 (NKID), 183 to 190 (GKPNVGKS), 230 to 234 (DTAGL), and 295 to 298 (NKWD) each bind GTP. The 85-residue stretch at 353–437 (KRVKTGVLND…GIKLEFRERK (85 aa)) folds into the KH-like domain.

Belongs to the TRAFAC class TrmE-Era-EngA-EngB-Septin-like GTPase superfamily. EngA (Der) GTPase family. Associates with the 50S ribosomal subunit.

GTPase that plays an essential role in the late steps of ribosome biogenesis. This Clostridium botulinum (strain Langeland / NCTC 10281 / Type F) protein is GTPase Der.